The sequence spans 136 residues: Putative nickel-responsive regulator (136 aa).

His-76, His-87, His-89, and Cys-95 together coordinate Ni(2+).

Belongs to the transcriptional regulatory CopG/NikR family. Ni(2+) serves as cofactor.

Its function is as follows. Transcriptional regulator. In Desulfotalea psychrophila (strain LSv54 / DSM 12343), this protein is Putative nickel-responsive regulator.